Here is a 437-residue protein sequence, read N- to C-terminus: GTPase Obg (437 aa).

The 159-residue stretch at 2–160 folds into the Obg domain; sequence SMFLDTAKIS…RELQLELKIL (159 aa). Residues 127-146 form a disordered region; sequence GNIRFATPRNPAPEIAENGE. The OBG-type G domain occupies 161-338; the sequence is ADVGLVGFPS…LLEATAELLD (178 aa). Residues 167-174, 192-196, 214-217, 284-287, and 319-321 contribute to the GTP site; these read GFPSVGKS, FTTIV, DLPG, NKMD, and SSL. The Mg(2+) site is built by serine 174 and threonine 194. Residues 359 to 437 enclose the OCT domain; that stretch reads GFNEEERPFE…IGNFEFEFVD (79 aa).

The protein belongs to the TRAFAC class OBG-HflX-like GTPase superfamily. OBG GTPase family. As to quaternary structure, monomer. It depends on Mg(2+) as a cofactor.

The protein localises to the cytoplasm. An essential GTPase which binds GTP, GDP and possibly (p)ppGpp with moderate affinity, with high nucleotide exchange rates and a fairly low GTP hydrolysis rate. Plays a role in control of the cell cycle, stress response, ribosome biogenesis and in those bacteria that undergo differentiation, in morphogenesis control. This Streptococcus thermophilus (strain ATCC BAA-491 / LMD-9) protein is GTPase Obg.